Reading from the N-terminus, the 279-residue chain is Dehydrogenase/reductase SDR family member 4 (279 aa).

37-61 (LVTASTDGIGFAIARRLAQDGAHVV) is a binding site for NADP(+). Lys93 carries the post-translational modification N6-acetyllysine; alternate. Lys93 carries the post-translational modification N6-succinyllysine; alternate. Position 106 is an N6-acetyllysine (Lys106). Ser170 provides a ligand contact to substrate. The active-site Proton acceptor is the Tyr183. Lys187 provides a ligand contact to NADP(+). Ser221 carries the phosphoserine modification. Lys235 bears the N6-succinyllysine mark. The Peroxisomal targeting signal signature appears at 277-279 (SHL).

Belongs to the short-chain dehydrogenases/reductases (SDR) family. In terms of assembly, homotetramer.

It is found in the peroxisome. It carries out the reaction a secondary alcohol + NADP(+) = a ketone + NADPH + H(+). The catalysed reaction is 3alpha-hydroxy-5beta-pregnan-20-one + NADP(+) = 5beta-pregnan-3,20-dione + NADPH + H(+). It catalyses the reaction 5beta-dihydrotestosterone + NADPH + H(+) = 5beta-androstane-3alpha,17beta-diol + NADP(+). The enzyme catalyses all-trans-retinol + NADP(+) = all-trans-retinal + NADPH + H(+). It carries out the reaction isatin + NADPH + H(+) = 3-hydroxyindolin-2-one + NADP(+). NADPH-dependent oxidoreductase which catalyzes the reduction of a variety of compounds bearing carbonyl groups including ketosteroids, alpha-dicarbonyl compounds, aldehydes, aromatic ketones and quinones. Reduces all-trans-retinal and 9-cis retinal. Reduces 3-ketosteroids and benzil into 3alpha-hydroxysteroids and S-benzoin, respectively, in contrast to the stereoselectivity of primates DHRS4s which produce 3beta-hydroxysteroids and R-benzoin. In the reverse reaction, catalyzes the NADP-dependent oxidation of 3alpha-hydroxysteroids and alcohol, but with much lower efficiency. Involved in the metabolism of 3alpha-hydroxysteroids, retinoid, isatin and xenobiotic carbonyl compounds. The protein is Dehydrogenase/reductase SDR family member 4 (DHRS4) of Bos taurus (Bovine).